A 255-amino-acid polypeptide reads, in one-letter code: tRNA (guanine-N(1)-)-methyltransferase (255 aa).

S-adenosyl-L-methionine is bound by residues G117 and 137 to 142 (LGDFVL).

The protein belongs to the RNA methyltransferase TrmD family. In terms of assembly, homodimer.

It localises to the cytoplasm. The catalysed reaction is guanosine(37) in tRNA + S-adenosyl-L-methionine = N(1)-methylguanosine(37) in tRNA + S-adenosyl-L-homocysteine + H(+). Its function is as follows. Specifically methylates guanosine-37 in various tRNAs. This Paraburkholderia xenovorans (strain LB400) protein is tRNA (guanine-N(1)-)-methyltransferase.